Here is a 558-residue protein sequence, read N- to C-terminus: Protein OS-9 homolog (558 aa).

The N-terminal stretch at 1-17 is a signal peptide; that stretch reads MLLKSLALIASSSLAAT. Asn68 is a glycosylation site (N-linked (GlcNAc...) asparagine). Positions 111–237 constitute an MRH domain; it reads GDCLFYEQGF…QVGTPRLCKD (127 aa). Cys113 and Cys126 form a disulfide bridge. Residues Gln133, Arg197, Glu219, and Tyr225 each coordinate a mannooligosaccharide derivative. Intrachain disulfides connect Cys190/Cys223 and Cys205/Cys235. Disordered stretches follow at residues 435–508 and 539–558; these read SKKL…DEDE and KDLADKEDDDDDYEDYGLSD. The segment covering 441 to 466 has biased composition (basic and acidic residues); sequence KKEAASTKREEAKKQVEASVEEKAVD. Residues 474–492 show a composition bias toward polar residues; sequence DTVTSTQTFFRTQTLSTAE. Residues 543–558 are compositionally biased toward acidic residues; it reads DKEDDDDDYEDYGLSD.

The protein belongs to the OS-9 family. In terms of assembly, interacts with missfolded ER lumenal proteins.

Its subcellular location is the endoplasmic reticulum membrane. Functionally, lectin involved in the quality control of the secretory pathway. As a member of the endoplasmic reticulum-associated degradation lumenal (ERAD-L) surveillance system, targets misfolded endoplasmic reticulum lumenal glycoproteins for degradation. This is Protein OS-9 homolog (YOS9) from Yarrowia lipolytica (strain CLIB 122 / E 150) (Yeast).